The following is a 335-amino-acid chain: Phosphate acyltransferase (335 aa).

It belongs to the PlsX family. Homodimer. Probably interacts with PlsY.

Its subcellular location is the cytoplasm. The enzyme catalyses a fatty acyl-[ACP] + phosphate = an acyl phosphate + holo-[ACP]. Its pathway is lipid metabolism; phospholipid metabolism. Its function is as follows. Catalyzes the reversible formation of acyl-phosphate (acyl-PO(4)) from acyl-[acyl-carrier-protein] (acyl-ACP). This enzyme utilizes acyl-ACP as fatty acyl donor, but not acyl-CoA. In Streptococcus pyogenes serotype M28 (strain MGAS6180), this protein is Phosphate acyltransferase.